We begin with the raw amino-acid sequence, 556 residues long: Olefin beta-lactone synthetase (556 aa).

ATP contacts are provided by residues 187-195, 321-326, Asp-430, and Arg-445; these read TSGSTGVPK and TPYGAT.

This sequence belongs to the ATP-dependent AMP-binding enzyme family. As to quaternary structure, monomer. Forms a complex with OleB and OleD.

It is found in the cytoplasm. The enzyme catalyses a (2R,3S)-2-alkyl-3-hydroxyalkanoate + ATP = a cis-3-alkyl-4-alkyloxetan-2-one + AMP + diphosphate. Functionally, involved in olefin biosynthesis. Catalyzes the conversion of 2-alkyl-3-hydroxyalkanoic acids to beta-lactones in the presence of ATP. This Xanthomonas campestris pv. campestris (strain ATCC 33913 / DSM 3586 / NCPPB 528 / LMG 568 / P 25) protein is Olefin beta-lactone synthetase.